Reading from the N-terminus, the 105-residue chain is uncharacterized protein (105 aa).

A helical membrane pass occupies residues 41–62 (GIITKIAASPFVIVLYFNTAFF).

The protein resides in the membrane. This is an uncharacterized protein from Saccharomyces cerevisiae (strain ATCC 204508 / S288c) (Baker's yeast).